Here is a 518-residue protein sequence, read N- to C-terminus: Ribonuclease Y (518 aa).

A helical membrane pass occupies residues 2–22 (GSIIISALLALVIGAVVGFFV). The KH domain maps to 208 to 271 (TVSVVNLPND…ETARIALDKL (64 aa)). The 94-residue stretch at 334–427 (VLKHSVEVAF…VAAADALSAA (94 aa)) folds into the HD domain.

It belongs to the RNase Y family.

The protein resides in the cell membrane. Endoribonuclease that initiates mRNA decay. In Geobacillus kaustophilus (strain HTA426), this protein is Ribonuclease Y.